Consider the following 1120-residue polypeptide: Elongation factor-like GTPase 1 (1120 aa).

The tr-type G domain maps to Ala-17–Tyr-272. GTP contacts are provided by residues Ala-26 to Thr-33, Asp-92 to His-96, and Asn-146 to Asp-149. Residues Pro-430 to Leu-496 are disordered. Basic and acidic residues-rich tracts occupy residues Ile-438–Lys-452 and Pro-475–Glu-484. The residue at position 528 (Lys-528) is an N6-acetyllysine. Residues Ala-907–Leu-930 form a disordered region. Residues Thr-920 to Leu-930 are compositionally biased toward polar residues.

This sequence belongs to the TRAFAC class translation factor GTPase superfamily. Classic translation factor GTPase family. As to quaternary structure, associates with the 60S ribosomal subunit. Found in a complex consisting of the 60S ribosomal subunit, SBDS and EFL1. Interacts with SBDS and binds to GTP and GDP; the interaction with SBDS decreases EFL1 affinity for GDP and facilitates GDP release. In terms of tissue distribution, expressed at low levels in brain. Expression is highly increased in glioma tissues.

It carries out the reaction GTP + H2O = GDP + phosphate + H(+). With respect to regulation, GTPase activity is stimulated in the presence of 60S ribosome subunits. GTPase involved in the biogenesis of the 60S ribosomal subunit and translational activation of ribosomes. Together with SBDS, triggers the GTP-dependent release of EIF6 from 60S pre-ribosomes in the cytoplasm, thereby activating ribosomes for translation competence by allowing 80S ribosome assembly and facilitating EIF6 recycling to the nucleus, where it is required for 60S rRNA processing and nuclear export. This Homo sapiens (Human) protein is Elongation factor-like GTPase 1.